Consider the following 396-residue polypeptide: Elongation factor Tu (396 aa).

The region spanning 10–206 (KPHVNVGTIG…ALDTYIPTPE (197 aa)) is the tr-type G domain. Residues 19–26 (GHVDHGKT) are G1. 19–26 (GHVDHGKT) lines the GTP pocket. Thr-26 serves as a coordination point for Mg(2+). The segment at 60–64 (GITIN) is G2. The segment at 81-84 (DCPG) is G3. Residues 81-85 (DCPGH) and 136-139 (NKCD) contribute to the GTP site. The interval 136–139 (NKCD) is G4. A G5 region spans residues 174 to 176 (SAK).

It belongs to the TRAFAC class translation factor GTPase superfamily. Classic translation factor GTPase family. EF-Tu/EF-1A subfamily. In terms of assembly, monomer.

The protein localises to the cytoplasm. It catalyses the reaction GTP + H2O = GDP + phosphate + H(+). Functionally, GTP hydrolase that promotes the GTP-dependent binding of aminoacyl-tRNA to the A-site of ribosomes during protein biosynthesis. The sequence is that of Elongation factor Tu from Burkholderia cenocepacia (strain HI2424).